The sequence spans 388 residues: Mannitol-1-phosphate 5-dehydrogenase (388 aa).

Position 4-15 (4-15 (AVHFGAGNIGRG)) interacts with NAD(+).

This sequence belongs to the mannitol dehydrogenase family.

It catalyses the reaction D-mannitol 1-phosphate + NAD(+) = beta-D-fructose 6-phosphate + NADH + H(+). The chain is Mannitol-1-phosphate 5-dehydrogenase from Lactococcus lactis subsp. cremoris (strain SK11).